Here is a 546-residue protein sequence, read N- to C-terminus: Pre-mRNA-splicing factor 38B (546 aa).

Over residues 1-14 (MANNSPALTGNSQP) the composition is skewed to polar residues. Residues 1–40 (MANNSPALTGNSQPQHQAAAAAAQQQQQCGGGGATKPAVS) form a disordered region. N-acetylalanine is present on Ala2. Ser5 carries the phosphoserine modification. Low complexity predominate over residues 15–28 (QHQAAAAAAQQQQQ). Residue Lys227 is modified to N6-acetyllysine. Positions 229–546 (IDQQIKTRPR…KQHKNKDETV (318 aa)) are disordered. Residues 243–255 (DGKEGAEEIDRHV) show a composition bias toward basic and acidic residues. Over residues 256–284 (ERRRSRSPRRSLSPRRSPRRSRSRSHHRE) the composition is skewed to basic residues. 4 positions are modified to phosphoserine: Ser288, Ser290, Ser318, and Ser320. Positions 291–327 (FDRELEREKERQRLEREAKEREKERRRSRSIDRGLER) are enriched in basic and acidic residues. A coiled-coil region spans residues 292–321 (DRELEREKERQRLEREAKEREKERRRSRSI). A compositionally biased stretch (basic residues) spans 328 to 344 (RRSRSRERHRSRSRSRD). A compositionally biased stretch (basic and acidic residues) spans 345–421 (RKGDRRDRDR…HRDDKRDSKK (77 aa)). Basic residues predominate over residues 422-450 (EKKHSRSRSRERKHRSRSRSRNAGKRSRS). Residue Ser448 is modified to Phosphoserine. The span at 451–468 (RSKEKSSKHKNESKEKSN) shows a compositional bias: basic and acidic residues. A phosphoserine mark is found at Ser473, Ser475, and Ser481. Residues 480–495 (DSVEKSKKREHSPSKE) show a composition bias toward basic and acidic residues. Residues 496 to 510 (KSRKRSRSKERSHKR) are compositionally biased toward basic residues. The span at 511-546 (DHSDSKDQSDKHDRRRSQSIEQESQEKQHKNKDETV) shows a compositional bias: basic and acidic residues. Ser527, Ser529, and Ser534 each carry phosphoserine.

It belongs to the PRP38 family.

It localises to the nucleus. In terms of biological role, may be required for pre-mRNA splicing. The polypeptide is Pre-mRNA-splicing factor 38B (PRPF38B) (Homo sapiens (Human)).